Consider the following 328-residue polypeptide: Flotillin-like protein FloA (328 aa).

2 helical membrane-spanning segments follow: residues 1–21 and 26–46; these read MFGLGIIVIAVIIVIALLVLF and VGLWISAIAAGVKVGIGTLVG.

Belongs to the flotillin-like FloA family. Homooligomerizes.

Its subcellular location is the cell membrane. The protein localises to the membrane raft. Functionally, found in functional membrane microdomains (FMM) that may be equivalent to eukaryotic membrane rafts. FMMs are highly dynamic and increase in number as cells age. Flotillins are thought to be important factors in membrane fluidity. The polypeptide is Flotillin-like protein FloA (Staphylococcus haemolyticus (strain JCSC1435)).